A 101-amino-acid chain; its full sequence is NAD(P)H-quinone oxidoreductase subunit 4L, chloroplastic (101 aa).

Transmembrane regions (helical) follow at residues 2-22 (MLEH…YGLI), 32-52 (MCLE…SDLF), and 61-81 (IFSI…PAIV).

It belongs to the complex I subunit 4L family. NDH is composed of at least 16 different subunits, 5 of which are encoded in the nucleus.

The protein localises to the plastid. The protein resides in the chloroplast thylakoid membrane. It catalyses the reaction a plastoquinone + NADH + (n+1) H(+)(in) = a plastoquinol + NAD(+) + n H(+)(out). The catalysed reaction is a plastoquinone + NADPH + (n+1) H(+)(in) = a plastoquinol + NADP(+) + n H(+)(out). NDH shuttles electrons from NAD(P)H:plastoquinone, via FMN and iron-sulfur (Fe-S) centers, to quinones in the photosynthetic chain and possibly in a chloroplast respiratory chain. The immediate electron acceptor for the enzyme in this species is believed to be plastoquinone. Couples the redox reaction to proton translocation, and thus conserves the redox energy in a proton gradient. The polypeptide is NAD(P)H-quinone oxidoreductase subunit 4L, chloroplastic (Ceratophyllum demersum (Rigid hornwort)).